Consider the following 342-residue polypeptide: Probable endoglucanase (342 aa).

The first 20 residues, 1 to 20, serve as a signal peptide directing secretion; that stretch reads MSVMAAMGGAQVLSSTGAFA. The active-site Proton donor is Glu57. Asp114 (nucleophile) is an active-site residue.

Belongs to the glycosyl hydrolase 8 (cellulase D) family.

The protein resides in the secreted. It catalyses the reaction Endohydrolysis of (1-&gt;4)-beta-D-glucosidic linkages in cellulose, lichenin and cereal beta-D-glucans.. In terms of biological role, enzyme capable of hydrolyzing carboxy-methyl-cellulose (CMC). The sequence is that of Probable endoglucanase (cmcAX) from Novacetimonas hansenii (Komagataeibacter hansenii).